A 476-amino-acid polypeptide reads, in one-letter code: Inosine-5'-monophosphate dehydrogenase (476 aa).

CBS domains lie at 92-150 (MIEN…IADV) and 151-207 (MTKD…PNAS). NAD(+) is bound by residues aspartate 244 and 294-296 (GVG). Positions 296 and 298 each coordinate K(+). Residue serine 299 coordinates IMP. Residue cysteine 301 participates in K(+) binding. Cysteine 301 acts as the Thioimidate intermediate in catalysis. IMP contacts are provided by residues 334-336 (DGG), 357-358 (GS), 381-385 (YRGMA), and glutamate 413. K(+) is bound by residues glutamate 467 and serine 468.

This sequence belongs to the IMPDH/GMPR family. As to quaternary structure, homotetramer. K(+) is required as a cofactor.

It carries out the reaction IMP + NAD(+) + H2O = XMP + NADH + H(+). The protein operates within purine metabolism; XMP biosynthesis via de novo pathway; XMP from IMP: step 1/1. Mycophenolic acid (MPA) is a non-competitive inhibitor that prevents formation of the closed enzyme conformation by binding to the same site as the amobile flap. In contrast, mizoribine monophosphate (MZP) is a competitive inhibitor that induces the closed conformation. MPA is a potent inhibitor of mammalian IMPDHs but a poor inhibitor of the bacterial enzymes. MZP is a more potent inhibitor of bacterial IMPDH. In terms of biological role, catalyzes the conversion of inosine 5'-phosphate (IMP) to xanthosine 5'-phosphate (XMP), the first committed and rate-limiting step in the de novo synthesis of guanine nucleotides, and therefore plays an important role in the regulation of cell growth. The chain is Inosine-5'-monophosphate dehydrogenase from Nitrosopumilus maritimus (strain SCM1).